A 289-amino-acid polypeptide reads, in one-letter code: Glucosamine-6-phosphate deaminase 1 (289 aa).

At Lys64 the chain carries N6-acetyllysine. The active-site Proton acceptor; for enolization step is Asp72. Residue Asp141 is the For ring-opening step of the active site. His143 functions as the Proton acceptor; for ring-opening step in the catalytic mechanism. Glu148 functions as the For ring-opening step in the catalytic mechanism. Thr161 is modified (phosphothreonine).

It belongs to the glucosamine/galactosamine-6-phosphate isomerase family. Homohexamer. As to expression, at the equatorial segment of the sperm head.

The protein localises to the cytoplasm. The catalysed reaction is alpha-D-glucosamine 6-phosphate + H2O = beta-D-fructose 6-phosphate + NH4(+). Its pathway is nucleotide-sugar biosynthesis; UDP-N-acetyl-alpha-D-glucosamine biosynthesis; alpha-D-glucosamine 6-phosphate from D-fructose 6-phosphate: step 1/1. With respect to regulation, allosterically activated by N-acetylglucosamine-6-phosphate (GlcNAc6P). Catalyzes the reversible conversion of alpha-D-glucosamine 6-phosphate (GlcN-6P) into beta-D-fructose 6-phosphate (Fru-6P) and ammonium ion, a regulatory reaction step in de novo uridine diphosphate-N-acetyl-alpha-D-glucosamine (UDP-GlcNAc) biosynthesis via hexosamine pathway. Deamination is coupled to aldo-keto isomerization mediating the metabolic flux from UDP-GlcNAc toward Fru-6P. At high ammonium level can drive amination and isomerization of Fru-6P toward hexosamines and UDP-GlcNAc synthesis. Has a role in fine tuning the metabolic fluctuations of cytosolic UDP-GlcNAc and their effects on hyaluronan synthesis that occur during tissue remodeling. Seems to trigger calcium oscillations in mammalian eggs. These oscillations serve as the essential trigger for egg activation and early development of the embryo. This is Glucosamine-6-phosphate deaminase 1 from Mesocricetus auratus (Golden hamster).